The primary structure comprises 242 residues: MEKAYKLLSVQENISHKKAKALIDSGLVSIGGQKLMVARKELPQNTRFSVQKVEKPSVIFEDENILALFKPPFIESYDLVSFFKGWALLHRLDKETSGVILLVKENSEFHLKAKKAFKDRAVKKEYLAIVQGIIEEEREINAPILTIKTTKAFSKISKKGQEAVTIITPLKIINKKTLLKVGIKTGRTHQIRVHLKHINHPIIGDTLYNNEPSSAKRLMLHAHKIALLGYEFEAIAPKEFEI.

Residues 2-62 form the S4 RNA-binding domain; the sequence is EKAYKLLSVQ…VEKPSVIFED (61 aa). D93 is a catalytic residue.

This sequence belongs to the pseudouridine synthase RluA family.

The catalysed reaction is a uridine in RNA = a pseudouridine in RNA. This is an uncharacterized protein from Helicobacter pylori (strain J99 / ATCC 700824) (Campylobacter pylori J99).